The sequence spans 118 residues: Ribosome-binding factor A (118 aa).

It belongs to the RbfA family. Monomer. Binds 30S ribosomal subunits, but not 50S ribosomal subunits or 70S ribosomes.

It localises to the cytoplasm. One of several proteins that assist in the late maturation steps of the functional core of the 30S ribosomal subunit. Associates with free 30S ribosomal subunits (but not with 30S subunits that are part of 70S ribosomes or polysomes). Required for efficient processing of 16S rRNA. May interact with the 5'-terminal helix region of 16S rRNA. The sequence is that of Ribosome-binding factor A from Bacillus thuringiensis (strain Al Hakam).